Here is a 505-residue protein sequence, read N- to C-terminus: Lysine--tRNA ligase (505 aa).

2 residues coordinate Mg(2+): glutamate 409 and glutamate 416.

This sequence belongs to the class-II aminoacyl-tRNA synthetase family. As to quaternary structure, homodimer. It depends on Mg(2+) as a cofactor.

It localises to the cytoplasm. It carries out the reaction tRNA(Lys) + L-lysine + ATP = L-lysyl-tRNA(Lys) + AMP + diphosphate. This Latilactobacillus sakei subsp. sakei (strain 23K) (Lactobacillus sakei subsp. sakei) protein is Lysine--tRNA ligase.